The following is a 398-amino-acid chain: NADH dehydrogenase [ubiquinone] iron-sulfur protein 2 (398 aa).

Residues C261, C267, and C282 each coordinate [4Fe-4S] cluster.

This sequence belongs to the complex I 49 kDa subunit family. Complex I is composed of about 45 different subunits. This is a component of the iron-sulfur (IP) fragment of the enzyme. The cofactor is [4Fe-4S] cluster.

Its subcellular location is the mitochondrion. It catalyses the reaction a ubiquinone + NADH + 5 H(+)(in) = a ubiquinol + NAD(+) + 4 H(+)(out). In terms of biological role, core subunit of the mitochondrial membrane respiratory chain NADH dehydrogenase (Complex I) that is believed to belong to the minimal assembly required for catalysis. Complex I functions in the transfer of electrons from NADH to the respiratory chain. The immediate electron acceptor for the enzyme is believed to be ubiquinone. Component of the iron-sulfur (IP) fragment of the enzyme. This chain is NADH dehydrogenase [ubiquinone] iron-sulfur protein 2 (NAD7), found in Nephroselmis olivacea (Green alga).